The chain runs to 238 residues: Type III secretion protein hrcQa (238 aa).

The hrcQa-C stretch occupies residues 66-238; it reads DAEALLSLLG…SHEEHSHHEY (173 aa).

Interacts with hrcQb.

The protein resides in the cell inner membrane. Functionally, component of the type III secretion system, which is required for effector protein delivery, parasitism, and pathogenicity. Probably participates in the formation of a C-ring-like assembly along with hrcQb. The chain is Type III secretion protein hrcQa (hrcQa) from Pseudomonas syringae pv. syringae.